The sequence spans 127 residues: Small ribosomal subunit protein uS11 (127 aa).

This sequence belongs to the universal ribosomal protein uS11 family. Part of the 30S ribosomal subunit. Interacts with proteins S7 and S18. Binds to IF-3.

In terms of biological role, located on the platform of the 30S subunit, it bridges several disparate RNA helices of the 16S rRNA. Forms part of the Shine-Dalgarno cleft in the 70S ribosome. The protein is Small ribosomal subunit protein uS11 of Flavobacterium johnsoniae (strain ATCC 17061 / DSM 2064 / JCM 8514 / BCRC 14874 / CCUG 350202 / NBRC 14942 / NCIMB 11054 / UW101) (Cytophaga johnsonae).